Here is a 990-residue protein sequence, read N- to C-terminus: Serine/threonine-protein kinase ATG1 (990 aa).

The Protein kinase domain maps to 15–334 (FVIENEIGKG…FDDFFASPVI (320 aa)). Residues 21–29 (IGKGSFAVV) and Lys-44 each bind ATP. Asp-165 serves as the catalytic Proton acceptor. Residues 375 to 408 (VSSIEASTQQPGVQPPVSTATSPPALESRSTQEA) are compositionally biased toward polar residues. Disordered stretches follow at residues 375 to 499 (VSSI…GGED), 529 to 566 (SRLG…TILS), 579 to 614 (ASTG…QGGQ), 750 to 784 (LSQE…SSSS), and 970 to 990 (SPVG…TESP). 2 stretches are compositionally biased toward low complexity: residues 529–554 (SRLG…SAPG) and 587–613 (PPGS…RQGG). Over residues 750–771 (LSQELDSSTATSGISPSRNSVQ) the composition is skewed to polar residues. Residues 772–784 (GSARRVGSISSSS) show a composition bias toward low complexity.

This sequence belongs to the protein kinase superfamily. Ser/Thr protein kinase family. APG1/unc-51/ULK1 subfamily. In terms of assembly, homodimer. Forms a ternary complex with ATG13 and ATG17.

It is found in the cytoplasm. The protein resides in the preautophagosomal structure membrane. The enzyme catalyses L-seryl-[protein] + ATP = O-phospho-L-seryl-[protein] + ADP + H(+). It catalyses the reaction L-threonyl-[protein] + ATP = O-phospho-L-threonyl-[protein] + ADP + H(+). Serine/threonine protein kinase involved in the cytoplasm to vacuole transport (Cvt) and found to be essential in autophagy, where it is required for the formation of autophagosomes. Involved in the clearance of protein aggregates which cannot be efficiently cleared by the proteasome. Required for selective autophagic degradation of the nucleus (nucleophagy) as well as for mitophagy which contributes to regulate mitochondrial quantity and quality by eliminating the mitochondria to a basal level to fulfill cellular energy requirements and preventing excess ROS production. Also involved in endoplasmic reticulum-specific autophagic process, in selective removal of ER-associated degradation (ERAD) substrates. Plays a key role in ATG9 and ATG23 cycling through the pre-autophagosomal structure and is necessary to promote ATG18 binding to ATG9 through phosphorylation of ATG9. Catalyzes phosphorylation of ATG4, decreasing the interaction between ATG4 and ATG8 and impairing deconjugation of PE-conjugated forms of ATG8. Required for wild-type budding of haploid sporidia and for complete symptom development during pathogenic growth such as gall formation and teliospore production in ears of mature maize. The chain is Serine/threonine-protein kinase ATG1 from Mycosarcoma maydis (Corn smut fungus).